We begin with the raw amino-acid sequence, 442 residues long: Zuotin (442 aa).

Positions 49-84 (RQRHGRTFSEDERLEVKNKVQEEVKEESEDEEEDPA) are disordered. The residue at position 55 (threonine 55) is a Phosphothreonine. Positions 55–71 (TFSEDERLEVKNKVQEE) are enriched in basic and acidic residues. Phosphoserine is present on residues serine 57 and serine 76. Residues 72-83 (VKEESEDEEEDP) show a composition bias toward acidic residues. The region spanning 97-167 (DHYAVLGLSK…VRRRQFDSVD (71 aa)) is the J domain. Disordered stretches follow at residues 242–270 (DGESRDNKRFQEKKNRSERQKNKARDNAR) and 306–331 (GAREAAAAAQKKKEEEERRAAEEAAA). A compositionally biased stretch (basic and acidic residues) spans 316–330 (KKKEEEERRAAEEAA).

As to quaternary structure, RAC is a heterodimer of the Hsp70/DnaK-type chaperone ssz1 and the Hsp40/DnaJ-type chaperone zuo1. RAC associates with ribosomes via zuo1.

The protein resides in the cytoplasm. Its function is as follows. Component of the ribosome-associated complex (RAC), a heterodimeric chaperone complex involved in regulation of accurate translation termination and in folding or maintaining nascent polypeptides in a folding-competent state. RAC stimulates the ATPase activity of the ribosome-associated pool of Hsp70-type chaperones SSB1/SSB2 that bind to the nascent polypeptide chain. The chain is Zuotin (zuo1) from Schizosaccharomyces pombe (strain 972 / ATCC 24843) (Fission yeast).